We begin with the raw amino-acid sequence, 239 residues long: 1-(5-phosphoribosyl)-5-[(5-phosphoribosylamino)methylideneamino] imidazole-4-carboxamide isomerase (239 aa).

The Proton acceptor role is filled by D9. Residue D131 is the Proton donor of the active site.

This sequence belongs to the HisA/HisF family.

Its subcellular location is the cytoplasm. The catalysed reaction is 1-(5-phospho-beta-D-ribosyl)-5-[(5-phospho-beta-D-ribosylamino)methylideneamino]imidazole-4-carboxamide = 5-[(5-phospho-1-deoxy-D-ribulos-1-ylimino)methylamino]-1-(5-phospho-beta-D-ribosyl)imidazole-4-carboxamide. It participates in amino-acid biosynthesis; L-histidine biosynthesis; L-histidine from 5-phospho-alpha-D-ribose 1-diphosphate: step 4/9. This chain is 1-(5-phosphoribosyl)-5-[(5-phosphoribosylamino)methylideneamino] imidazole-4-carboxamide isomerase, found in Bacteroides fragilis (strain ATCC 25285 / DSM 2151 / CCUG 4856 / JCM 11019 / LMG 10263 / NCTC 9343 / Onslow / VPI 2553 / EN-2).